The following is a 302-amino-acid chain: Sulfate adenylyltransferase subunit 2 (302 aa).

This sequence belongs to the PAPS reductase family. CysD subfamily. In terms of assembly, heterodimer composed of CysD, the smaller subunit, and CysN.

The catalysed reaction is sulfate + ATP + H(+) = adenosine 5'-phosphosulfate + diphosphate. It participates in sulfur metabolism; hydrogen sulfide biosynthesis; sulfite from sulfate: step 1/3. Functionally, with CysN forms the ATP sulfurylase (ATPS) that catalyzes the adenylation of sulfate producing adenosine 5'-phosphosulfate (APS) and diphosphate, the first enzymatic step in sulfur assimilation pathway. APS synthesis involves the formation of a high-energy phosphoric-sulfuric acid anhydride bond driven by GTP hydrolysis by CysN coupled to ATP hydrolysis by CysD. The sequence is that of Sulfate adenylyltransferase subunit 2 from Escherichia coli O6:K15:H31 (strain 536 / UPEC).